Here is a 593-residue protein sequence, read N- to C-terminus: Isocitrate dehydrogenase kinase/phosphatase (593 aa).

Residues 324–330 (APGIRGL) and Lys345 each bind ATP. The active site involves Asp380.

This sequence belongs to the AceK family.

It is found in the cytoplasm. The enzyme catalyses L-seryl-[isocitrate dehydrogenase] + ATP = O-phospho-L-seryl-[isocitrate dehydrogenase] + ADP + H(+). Its function is as follows. Bifunctional enzyme which can phosphorylate or dephosphorylate isocitrate dehydrogenase (IDH) on a specific serine residue. This is a regulatory mechanism which enables bacteria to bypass the Krebs cycle via the glyoxylate shunt in response to the source of carbon. When bacteria are grown on glucose, IDH is fully active and unphosphorylated, but when grown on acetate or ethanol, the activity of IDH declines drastically concomitant with its phosphorylation. This chain is Isocitrate dehydrogenase kinase/phosphatase, found in Dechloromonas aromatica (strain RCB).